Consider the following 155-residue polypeptide: NADPH-dependent 7-cyano-7-deazaguanine reductase (155 aa).

Cys-53 serves as the catalytic Thioimide intermediate. Asp-60 acts as the Proton donor in catalysis. Residues 75–77 and 94–95 each bind substrate; these read VES and HE.

It belongs to the GTP cyclohydrolase I family. QueF type 1 subfamily.

It is found in the cytoplasm. It catalyses the reaction 7-aminomethyl-7-carbaguanine + 2 NADP(+) = 7-cyano-7-deazaguanine + 2 NADPH + 3 H(+). It participates in tRNA modification; tRNA-queuosine biosynthesis. In terms of biological role, catalyzes the NADPH-dependent reduction of 7-cyano-7-deazaguanine (preQ0) to 7-aminomethyl-7-deazaguanine (preQ1). The polypeptide is NADPH-dependent 7-cyano-7-deazaguanine reductase (Brucella abortus (strain S19)).